A 91-amino-acid chain; its full sequence is UPF0250 protein Lcho_4239 (91 aa).

Belongs to the UPF0250 family.

The chain is UPF0250 protein Lcho_4239 from Leptothrix cholodnii (strain ATCC 51168 / LMG 8142 / SP-6) (Leptothrix discophora (strain SP-6)).